The following is a 254-amino-acid chain: Alcohol dehydrogenase 1 (254 aa).

10–33 provides a ligand contact to NAD(+); that stretch reads FVAGLGGIGLDTSREIVKSGPKNL. Serine 138 serves as a coordination point for substrate. Tyrosine 151 acts as the Proton acceptor in catalysis.

Belongs to the short-chain dehydrogenases/reductases (SDR) family. Homodimer.

The enzyme catalyses a primary alcohol + NAD(+) = an aldehyde + NADH + H(+). It catalyses the reaction a secondary alcohol + NAD(+) = a ketone + NADH + H(+). This is Alcohol dehydrogenase 1 (Adh1) from Drosophila hydei (Fruit fly).